Consider the following 164-residue polypeptide: MALNLQGKQAIVAEVNEAANGALSAVVADSRGVTVGAITALRKEARANGVWMKVVRNTLAKRALEGTQFECLSDSFVGPSLIAFSSEHPGAAARIFSAFAKKNEKFELKTAAFEGNVVDAAMLATLPTYDEAVARLMSAMKEASAGKLCKTIEAVRVQKEEQAA.

This sequence belongs to the universal ribosomal protein uL10 family. In terms of assembly, part of the ribosomal stalk of the 50S ribosomal subunit. The N-terminus interacts with L11 and the large rRNA to form the base of the stalk. The C-terminus forms an elongated spine to which L12 dimers bind in a sequential fashion forming a multimeric L10(L12)X complex.

In terms of biological role, forms part of the ribosomal stalk, playing a central role in the interaction of the ribosome with GTP-bound translation factors. The protein is Large ribosomal subunit protein uL10 of Pseudoalteromonas translucida (strain TAC 125).